Reading from the N-terminus, the 349-residue chain is 4-hydroxythreonine-4-phosphate dehydrogenase (349 aa).

Substrate-binding residues include His141 and Thr142. Positions 176, 221, and 276 each coordinate a divalent metal cation. 3 residues coordinate substrate: Lys284, Asn293, and Arg302.

This sequence belongs to the PdxA family. Homodimer. The cofactor is Zn(2+). It depends on Mg(2+) as a cofactor. Requires Co(2+) as cofactor.

The protein localises to the cytoplasm. It carries out the reaction 4-(phosphooxy)-L-threonine + NAD(+) = 3-amino-2-oxopropyl phosphate + CO2 + NADH. The protein operates within cofactor biosynthesis; pyridoxine 5'-phosphate biosynthesis; pyridoxine 5'-phosphate from D-erythrose 4-phosphate: step 4/5. Catalyzes the NAD(P)-dependent oxidation of 4-(phosphooxy)-L-threonine (HTP) into 2-amino-3-oxo-4-(phosphooxy)butyric acid which spontaneously decarboxylates to form 3-amino-2-oxopropyl phosphate (AHAP). This Methylorubrum populi (strain ATCC BAA-705 / NCIMB 13946 / BJ001) (Methylobacterium populi) protein is 4-hydroxythreonine-4-phosphate dehydrogenase.